A 622-amino-acid polypeptide reads, in one-letter code: Low affinity potassium transport system protein Kup (622 aa).

A run of 12 helical transmembrane segments spans residues 12 to 32 (ITLAAIGVVYGDIGTSPLYTL), 49 to 69 (VFGFLSLIFWLLIFVVSIKYL), 103 to 123 (VIMGLIGGSFFYGEVVITPAI), 137 to 157 (PQLDTWIVPLSIIVLTLLFMI), 165 to 185 (VGKLFAPIMLTWFLILAVLGL), 213 to 233 (VSFIALGAVVLSITGVEALYA), 247 to 267 (WFTVVLPSLVLNYFGQGALLL), 276 to 296 (PFFLLAPDWALIPLLILAALA), 337 to 357 (IYIPFVNWLLYFAVVVVIVSF), 363 to 383 (LAAAYGIAVTGTMVLTSILST), 396 to 416 (FVALILIAFLCVDIPLFSANL), and 419 to 439 (LLSGGWLPLSLGLIMFTIMTT).

This sequence belongs to the HAK/KUP transporter (TC 2.A.72) family.

The protein resides in the cell inner membrane. The enzyme catalyses K(+)(in) + H(+)(in) = K(+)(out) + H(+)(out). In terms of biological role, responsible for the low-affinity transport of potassium into the cell. Likely operates as a K(+):H(+) symporter. This chain is Low affinity potassium transport system protein Kup, found in Salmonella gallinarum (strain 287/91 / NCTC 13346).